Consider the following 29-residue polypeptide: MDIVSFAWAALMVVFTFSLSLVVWGRSGL.

The helical transmembrane segment at 3 to 23 threads the bilayer; it reads IVSFAWAALMVVFTFSLSLVV.

The protein belongs to the PetN family. In terms of assembly, the 4 large subunits of the cytochrome b6-f complex are cytochrome b6, subunit IV (17 kDa polypeptide, PetD), cytochrome f and the Rieske protein, while the 4 small subunits are PetG, PetL, PetM and PetN. The complex functions as a dimer.

It localises to the plastid. The protein resides in the chloroplast thylakoid membrane. Component of the cytochrome b6-f complex, which mediates electron transfer between photosystem II (PSII) and photosystem I (PSI), cyclic electron flow around PSI, and state transitions. The chain is Cytochrome b6-f complex subunit 8 from Phalaenopsis aphrodite subsp. formosana (Moth orchid).